A 482-amino-acid chain; its full sequence is 2-succinylbenzoate--CoA ligase (482 aa).

Belongs to the ATP-dependent AMP-binding enzyme family. MenE subfamily.

It carries out the reaction 2-succinylbenzoate + ATP + CoA = 2-succinylbenzoyl-CoA + AMP + diphosphate. It functions in the pathway quinol/quinone metabolism; 1,4-dihydroxy-2-naphthoate biosynthesis; 1,4-dihydroxy-2-naphthoate from chorismate: step 5/7. It participates in quinol/quinone metabolism; menaquinone biosynthesis. In terms of biological role, converts 2-succinylbenzoate (OSB) to 2-succinylbenzoyl-CoA (OSB-CoA). The chain is 2-succinylbenzoate--CoA ligase from Bacillus cereus (strain ZK / E33L).